Here is a 374-residue protein sequence, read N- to C-terminus: O-methyltransferase 16 (374 aa).

S-adenosyl-L-homocysteine is bound by residues serine 195, glycine 219, aspartate 242, aspartate 262, and lysine 276. Aspartate 242 provides a ligand contact to S-adenosyl-L-methionine. Catalysis depends on histidine 280, which acts as the Proton acceptor.

The protein belongs to the class I-like SAM-binding methyltransferase superfamily. Cation-independent O-methyltransferase family. As to quaternary structure, homodimer. As to expression, expressed mainly in vasculature and cortex tissues at low levels.

It carries out the reaction dopamine + S-adenosyl-L-methionine = 4-methoxytyramine + S-adenosyl-L-homocysteine + H(+). It participates in aromatic compound metabolism. The protein operates within alkaloid biosynthesis. Functionally, O-methyltransferase participating in the biosynthesis of natural products derived from phenylethylamine, including mescaline, a natural hallucinogen potentially used in psychotherapeutic treatments. Catalyzes the O-methylation of dopamine to produce 4-methoxytyramine. The polypeptide is O-methyltransferase 16 (Lophophora williamsii (Peyote)).